The chain runs to 2178 residues: DNA-directed RNA polymerase subunit beta (2178 aa).

3 insert regions span residues 269 to 325 (SKKI…TPFV), 714 to 1508 (KRID…LFYN), and 1703 to 1900 (KGND…LQPM).

The protein belongs to the RNA polymerase beta chain family. As to quaternary structure, in plastids the minimal PEP RNA polymerase catalytic core is composed of four subunits: alpha, beta, beta', and beta''. When a (nuclear-encoded) sigma factor is associated with the core the holoenzyme is formed, which can initiate transcription.

The protein localises to the plastid. Its subcellular location is the chloroplast. It carries out the reaction RNA(n) + a ribonucleoside 5'-triphosphate = RNA(n+1) + diphosphate. DNA-dependent RNA polymerase catalyzes the transcription of DNA into RNA using the four ribonucleoside triphosphates as substrates. In Tupiella akineta (Green alga), this protein is DNA-directed RNA polymerase subunit beta.